We begin with the raw amino-acid sequence, 105 residues long: Large ribosomal subunit protein uL24 (105 aa).

This sequence belongs to the universal ribosomal protein uL24 family. In terms of assembly, part of the 50S ribosomal subunit.

Its function is as follows. One of two assembly initiator proteins, it binds directly to the 5'-end of the 23S rRNA, where it nucleates assembly of the 50S subunit. Functionally, one of the proteins that surrounds the polypeptide exit tunnel on the outside of the subunit. The protein is Large ribosomal subunit protein uL24 of Mycolicibacterium smegmatis (strain ATCC 700084 / mc(2)155) (Mycobacterium smegmatis).